A 538-amino-acid chain; its full sequence is Syncytin-1 (538 aa).

The signal sequence occupies residues 1–20 (MALPYHIFLFTVLLPSFTLT). The Extracellular segment spans residues 31–443 (SSPYQEFLWR…NIGPWGLLSQ (413 aa)). An N-linked (GlcNAc...) asparagine glycan is attached at Asn-169. The CXXC signature appears at 186-189 (CWMC). 3 disulfides stabilise this stretch: Cys-186–Cys-189, Cys-186–Cys-405, and Cys-397–Cys-404. N-linked (GlcNAc...) asparagine glycans are attached at residues Asn-208, Asn-214, Asn-234, Asn-242, and Asn-281. The tract at residues 320 to 340 (ILPFVMGAGVLGALGTGIGSI) is fusion peptide. Positions 380-396 (LQNRRALDLLTAERGGT) are immunosuppression. The CX6CC motif lies at 397-405 (CLFLGEECC). Asn-409 is a glycosylation site (N-linked (GlcNAc...) asparagine). The helical transmembrane segment at 444–464 (WMPWILPFLGPLAAIILLLLF) threads the bilayer. The interval 465 to 484 (GPCIFNLLVNFVSSRIEAIK) is essential for the fusiogenic function. Residues 465 to 538 (GPCIFNLLVN…LLRPNSAGSS (74 aa)) are Cytoplasmic-facing. Residues 494 to 538 (KTKNYRRSLDWPASPRSDVNDIKGIPPEEISTAQPLLRPNSAGSS) form a disordered region.

Belongs to the gamma type-C retroviral envelope protein family. HERV class-I W env subfamily. The mature envelope protein (Env) consists of a trimer of SU-TM heterodimers attached probably by a labile interchain disulfide bond. Interacts with the C-type lectin CD209/DC-SIGN. Post-translationally, specific enzymatic cleavages in vivo yield mature proteins. Envelope glycoproteins are synthesized as an inactive precursor that is heavily N-glycosylated and processed likely by furin in the Golgi to yield the mature SU and TM proteins. The cleavage site between SU and TM requires the minimal sequence [KR]-X-[KR]-R. The CXXC motif is highly conserved across a broad range of retroviral envelope proteins. It is thought to participate in the formation of a labile disulfide bond possibly with the CX6CC motif present in the transmembrane protein.

The protein localises to the cell membrane. It is found in the virion. In terms of biological role, this endogenous retroviral envelope protein has retained its original fusogenic properties and participates in trophoblast fusion and the formation of a syncytium during placenta morphogenesis. May recognize and induce fusion through binding of SLC1A4 and SLC1A5. Its function is as follows. Endogenous envelope proteins may have kept, lost or modified their original function during evolution. Retroviral envelope proteins mediate receptor recognition and membrane fusion during early infection. The surface protein (SU) mediates receptor recognition, while the transmembrane protein (TM) acts as a class I viral fusion protein. The protein may have at least 3 conformational states: pre-fusion native state, pre-hairpin intermediate state, and post-fusion hairpin state. During viral and target cell membrane fusion, the coiled coil regions (heptad repeats) assume a trimer-of-hairpins structure, positioning the fusion peptide in close proximity to the C-terminal region of the ectodomain. The formation of this structure appears to drive apposition and subsequent fusion of membranes. In Hylobates pileatus (Pileated gibbon), this protein is Syncytin-1 (ERVW-1).